Consider the following 198-residue polypeptide: CXXC-type zinc finger protein 4 (198 aa).

The segment at 114–134 (NHSSSSSSSSGGAGGANPAKK) is disordered. The CXXC-type zinc finger occupies 132–173 (AKKKRKRCGVCVPCKRLINCGVCSSCRNRKTGHQICKFRKCE). Zn(2+)-binding residues include cysteine 139, cysteine 142, cysteine 145, cysteine 151, cysteine 154, and cysteine 157. Residues 161–166 (KTGHQI) form an interaction with DVL1 region. Zn(2+)-binding residues include cysteine 167 and cysteine 172.

Interacts with the PDZ domain of DVL1.

It localises to the cytoplasm. Its function is as follows. Acts as a negative regulator of the Wnt signaling pathway via its interaction with DVL1. Binds preferentially to DNA containing cytidine-phosphate-guanosine (CpG) dinucleotides over CpH (H=A, T, and C), hemimethylated-CpG and hemimethylated-hydroxymethyl-CpG. The sequence is that of CXXC-type zinc finger protein 4 (CXXC4) from Homo sapiens (Human).